The chain runs to 257 residues: Thiazole synthase (257 aa).

The active-site Schiff-base intermediate with DXP is lysine 98. 1-deoxy-D-xylulose 5-phosphate-binding positions include glycine 159, 185-186 (AG), and 207-208 (NT).

This sequence belongs to the ThiG family. In terms of assembly, homotetramer. Forms heterodimers with either ThiH or ThiS.

The protein localises to the cytoplasm. It carries out the reaction [ThiS sulfur-carrier protein]-C-terminal-Gly-aminoethanethioate + 2-iminoacetate + 1-deoxy-D-xylulose 5-phosphate = [ThiS sulfur-carrier protein]-C-terminal Gly-Gly + 2-[(2R,5Z)-2-carboxy-4-methylthiazol-5(2H)-ylidene]ethyl phosphate + 2 H2O + H(+). The protein operates within cofactor biosynthesis; thiamine diphosphate biosynthesis. Its function is as follows. Catalyzes the rearrangement of 1-deoxy-D-xylulose 5-phosphate (DXP) to produce the thiazole phosphate moiety of thiamine. Sulfur is provided by the thiocarboxylate moiety of the carrier protein ThiS. In vitro, sulfur can be provided by H(2)S. In Anaeromyxobacter sp. (strain Fw109-5), this protein is Thiazole synthase.